A 56-amino-acid chain; its full sequence is Keratin-associated protein 20-1 (56 aa).

This sequence belongs to the KRTAP type 20 family. As to quaternary structure, interacts with hair keratins.

Its function is as follows. In the hair cortex, hair keratin intermediate filaments are embedded in an interfilamentous matrix, consisting of hair keratin-associated proteins (KRTAP), which are essential for the formation of a rigid and resistant hair shaft through their extensive disulfide bond cross-linking with abundant cysteine residues of hair keratins. The matrix proteins include the high-sulfur and high-glycine-tyrosine keratins. The protein is Keratin-associated protein 20-1 (KRTAP20-1) of Homo sapiens (Human).